The following is a 254-amino-acid chain: MELIDKIKMSVKDLDLFYGDKQALKKINMDIKENKVTALIGPSGCGKSTFIRTLNRMNDLIEDVTIKGNISVDGEDIYTSDDVINLRTKVGMVFQKPNPFPMSIYDNVAYGPRTHGLRDKKQLDKIVEESLKGAAIWDEVKDRLKSSALGLSGGQQQRICIARAIAMRPEVILMDEPTSALDPISTLKVEELIEDLKKDYTIVIVTHNMQQAARISDETAFFLNGEVIEFSDTKTMFTTPVDKRTEDYITGRFG.

An ABC transporter domain is found at 9 to 249; sequence MSVKDLDLFY…PVDKRTEDYI (241 aa). 41–48 provides a ligand contact to ATP; that stretch reads GPSGCGKS.

Belongs to the ABC transporter superfamily. Phosphate importer (TC 3.A.1.7) family. In terms of assembly, the complex is composed of two ATP-binding proteins (PstB), two transmembrane proteins (PstC and PstA) and a solute-binding protein (PstS).

The protein localises to the cell membrane. It catalyses the reaction phosphate(out) + ATP + H2O = ADP + 2 phosphate(in) + H(+). Part of the ABC transporter complex PstSACB involved in phosphate import. Responsible for energy coupling to the transport system. This is Phosphate import ATP-binding protein PstB from Clostridioides difficile (strain 630) (Peptoclostridium difficile).